The primary structure comprises 88 residues: Small ribosomal subunit protein uS15 (88 aa).

The protein belongs to the universal ribosomal protein uS15 family. Part of the 30S ribosomal subunit. Forms a bridge to the 50S subunit in the 70S ribosome, contacting the 23S rRNA.

Functionally, one of the primary rRNA binding proteins, it binds directly to 16S rRNA where it helps nucleate assembly of the platform of the 30S subunit by binding and bridging several RNA helices of the 16S rRNA. Its function is as follows. Forms an intersubunit bridge (bridge B4) with the 23S rRNA of the 50S subunit in the ribosome. The chain is Small ribosomal subunit protein uS15 from Mycoplasmopsis pulmonis (strain UAB CTIP) (Mycoplasma pulmonis).